The chain runs to 102 residues: MASRHISVSEQSRPMLPRHAKLRFDETRQRWVILAPERVLAPDDIAVEILQLCDGARSVAAIIDTLALKYTADRAEIGADVIAMLQDLADKGFLTEAREKTP.

Belongs to the PqqD family. As to quaternary structure, monomer. Interacts with PqqE.

It participates in cofactor biosynthesis; pyrroloquinoline quinone biosynthesis. Its function is as follows. Functions as a PqqA binding protein and presents PqqA to PqqE, in the pyrroloquinoline quinone (PQQ) biosynthetic pathway. This chain is PqqA binding protein, found in Rhodopseudomonas palustris (strain HaA2).